Consider the following 312-residue polypeptide: Malate dehydrogenase (312 aa).

NAD(+) is bound by residues 7–13 (GAAGGIG) and D34. R81 and R87 together coordinate substrate. NAD(+)-binding positions include N94 and 117–119 (ITN). Substrate is bound by residues N119 and R153. The Proton acceptor role is filled by H177. M227 is an NAD(+) binding site.

The protein belongs to the LDH/MDH superfamily. MDH type 1 family. As to quaternary structure, homodimer.

The catalysed reaction is (S)-malate + NAD(+) = oxaloacetate + NADH + H(+). In terms of biological role, catalyzes the reversible oxidation of malate to oxaloacetate. This is Malate dehydrogenase from Escherichia fergusonii (strain ATCC 35469 / DSM 13698 / CCUG 18766 / IAM 14443 / JCM 21226 / LMG 7866 / NBRC 102419 / NCTC 12128 / CDC 0568-73).